A 569-amino-acid chain; its full sequence is MDIKRTVLWVIFSFSLLMLWDNYNRYTGKPSIFFDSTTTQQAAAPAATGNNAAKTADAPTAATTAATSGANTPGVPDGAAAVKSEVITITTDLMKIGIDTAGGEVRHLELLKHHESGDESKNVVLFDENGQHTYLGQTGLIGGAYPNHKSMFAAVPGPRTLDSANQVQLVLQSEQQGVKLIKTFTFKRGEYKVDIKHDVVNNTSTAITPSLYLQLVHDGSALGGGSMFMASAFTGPAIYTEADKFQKVTFESIEKGKAEHAMKGESGWIALVQHYFVSAFVPPANTPREYFTKKLATNLYAVGTILPMGTVAPGATASMDTTMYSGPQESKRLEAVAPGFELVKDYGWLTIIAKPIFWLMMQIHQILGNWGWTIIVLTIVIKLAFFPLSAAGYRSMAKMKLVTPKMTDIRTRYKGEPQKMNAAMMELYKKEKINPIGGCFPMLVQIPVFISLYWVLLASVEIRNASWLWIHDLAAPDILFGSYHIGTFHLTIGILPILMAISMFIQTKLNPTPPDPIQAKVMMFMPIAFSVMFFFFPAGLVLYWVVNNILSIAQQWFINEKLLGGKAKA.

A run of 8 helical transmembrane segments spans residues 7–24 (VLWV…DNYN), 219–239 (GSAL…PAIY), 299–319 (LYAV…TASM), 340–360 (FELV…FWLM), 366–386 (ILGN…LAFF), 436–456 (IGGC…YWVL), 485–505 (IGTF…SMFI), and 526–546 (PIAF…YWVV).

Belongs to the OXA1/ALB3/YidC family. Type 1 subfamily. As to quaternary structure, interacts with the Sec translocase complex via SecD. Specifically interacts with transmembrane segments of nascent integral membrane proteins during membrane integration.

The protein localises to the cell inner membrane. Functionally, required for the insertion and/or proper folding and/or complex formation of integral membrane proteins into the membrane. Involved in integration of membrane proteins that insert both dependently and independently of the Sec translocase complex, as well as at least some lipoproteins. Aids folding of multispanning membrane proteins. In Herminiimonas arsenicoxydans, this protein is Membrane protein insertase YidC.